The sequence spans 306 residues: Probable rRNA-processing protein EBP2 (306 aa).

N-acetylmethionine is present on Met1. Disordered stretches follow at residues 1 to 20 (MDTP…LVTD) and 77 to 99 (VPEI…VDPE). Thr3 is modified (phosphothreonine). A phosphoserine mark is found at Ser7, Ser9, Ser11, Ser13, and Ser16. Lys94 is covalently cross-linked (Glycyl lysine isopeptide (Lys-Gly) (interchain with G-Cter in SUMO2)). Positions 138 to 169 (AEMAKSDLQMQKIRQKLQTKQAAMERSEKAKQ) form a coiled coil. Residues Lys179 and Lys218 each participate in a glycyl lysine isopeptide (Lys-Gly) (interchain with G-Cter in SUMO2) cross-link. Positions 213-306 (LEGDQKPLAQ…TREKMKNRTH (94 aa)) are disordered. A phosphoserine mark is found at Ser264 and Ser270. The segment covering 274–306 (KTAHGRGLKRPGKKGSNKRPGKRTREKMKNRTH) has biased composition (basic residues).

This sequence belongs to the EBP2 family. In terms of assembly, specifically interacts with EBV EBNA1. The EBNA1-EBP2 interaction is important for the stable segregation of EBV episomes during cell division. Interacts with WDR46. In terms of tissue distribution, ubiquitous.

Its subcellular location is the nucleus. It localises to the nucleolus. Required for the processing of the 27S pre-rRNA. The sequence is that of Probable rRNA-processing protein EBP2 (EBNA1BP2) from Homo sapiens (Human).